The chain runs to 445 residues: Rab GDP dissociation inhibitor beta (445 aa).

N-acetylmethionine is present on Met1. Lys57 is subject to N6-succinyllysine. At Lys112 the chain carries N6-acetyllysine. Ser130 is modified (phosphoserine). Position 269 is an N6-acetyllysine (Lys269). Position 382 is a phosphoserine (Ser382).

Belongs to the Rab GDI family. As to quaternary structure, interacts with RHOH. Interacts with the GDP-bound inactive forms of RAB3A, RAB3B, RAB3C, RAB5A, RAB5B, RAB5C, RAB8A, RAB8B, RAB10, RAB12, RAB35, and RAB43; binds RAB3D to a lesser extent. Interacts with DZIP1; this interaction negatively regulates the interaction of GDI2 with GDP-bound RAB8A.

The protein localises to the cytoplasm. It is found in the membrane. The protein resides in the golgi apparatus. Its subcellular location is the trans-Golgi network. In terms of biological role, GDP-dissociation inhibitor preventing the GDP to GTP exchange of most Rab proteins. By keeping these small GTPases in their inactive GDP-bound form regulates intracellular membrane trafficking. Negatively regulates protein transport to the cilium and ciliogenesis through the inhibition of RAB8A. This is Rab GDP dissociation inhibitor beta (GDI2) from Pongo abelii (Sumatran orangutan).